The following is a 133-amino-acid chain: PKCRKEFQQAQHLKACQQWLHKQAMQSGGGPSWTLDGEFDFEDDMEKQGPQQRPPLHQQYCNELQQEEPLCVCPTLRGASKAVKQQIQQQEQQQGKQQMVNRIYQTATHLPKVCNIPQVSVCPFQKTMPGPSY.

Propeptides lie at residues 31-49 (PSWT…EKQG) and 131-133 (PSY).

Belongs to the 2S seed storage albumins family. The mature protein consists of a small and a large chain linked by disulfide bonds. As to expression, cotyledons and the axis.

Functionally, the small, basic, water-soluble napins are one of the two major kinds of storage proteins synthesized in the seed during its maturation. This Brassica napus (Rape) protein is Napin-1.